A 249-amino-acid chain; its full sequence is tRNA (guanine-N(1)-)-methyltransferase (249 aa).

Residues G113 and 133–138 (IGDFVL) contribute to the S-adenosyl-L-methionine site.

Belongs to the RNA methyltransferase TrmD family. As to quaternary structure, homodimer.

The protein localises to the cytoplasm. The catalysed reaction is guanosine(37) in tRNA + S-adenosyl-L-methionine = N(1)-methylguanosine(37) in tRNA + S-adenosyl-L-homocysteine + H(+). In terms of biological role, specifically methylates guanosine-37 in various tRNAs. The protein is tRNA (guanine-N(1)-)-methyltransferase of Aliivibrio fischeri (strain ATCC 700601 / ES114) (Vibrio fischeri).